The sequence spans 40 residues: Large ribosomal subunit protein bL36A (40 aa).

Belongs to the bacterial ribosomal protein bL36 family.

The chain is Large ribosomal subunit protein bL36A from Renibacterium salmoninarum (strain ATCC 33209 / DSM 20767 / JCM 11484 / NBRC 15589 / NCIMB 2235).